Consider the following 549-residue polypeptide: MAELIHSTIGRLLEQTADAYPDRDAVVYPDRNIRYTYAQFDSLCRQTAKGLMRMGIGKGDHVAIWASNISEWLAVQFATAKIGAVLVTVNTNYQAHELDYLLKQSDAAALIIMDSYRGTSYPDIVNSLIPELQEAKPGQLKSERYPFLKTLIYIGNKRLSGMYHWDDTEILAKTVTDAELEERMNSLDKDNVINMQYTSGTTGFPKGVMLTHFNVINNAANIAECMALTSQDRMCIPVPFFHCFGCVLGVLACVSVGAAMIPVQEFDPVTVLKTVEKEKCTVLHGVPTMFIAELHHPDFDAYDLSTLRTGIMAGSPCPSEVMKAVIERMGMKDITIAYGQTEASPVITQTRANDSFIRRVETTGRALPHTEVKIVEPGTCQEVQRGMQGELCTRGYHVMKGYYKDKDATRKAINHDGWLFTGDLAVMDEDGYCRITGRLKDMLIRGGENIYPREIEEFLYQHPAVLDVQVVGVPDAKFGEEAAAWIKLKDGKSVSPDELKAYCKGKIARHKIPRYVIFTDDYPMTASGKIQKYKLREKTIEMFNLSSSQ.

ATP is bound by residues 198-206, D423, R438, and K529; that span reads TSGTTGFPK.

The protein belongs to the ATP-dependent AMP-binding enzyme family.

This chain is Putative acyl-CoA synthetase YngI (yngI), found in Bacillus subtilis (strain 168).